A 506-amino-acid polypeptide reads, in one-letter code: RNA-splicing ligase RtcB homolog (506 aa).

The Mn(2+) site is built by aspartate 120, cysteine 123, histidine 228, histidine 260, and histidine 354. Residue asparagine 227–glutamate 231 coordinates GMP. GMP contacts are provided by residues histidine 354–asparagine 355, glycine 403–methionine 406, serine 410, histidine 429–glycine 432, and lysine 505. Histidine 429 serves as the catalytic GMP-histidine intermediate.

This sequence belongs to the RtcB family. As to quaternary structure, catalytic component of the tRNA-splicing ligase complex. Mn(2+) serves as cofactor.

The catalysed reaction is a 3'-end 3'-phospho-ribonucleotide-RNA + a 5'-end dephospho-ribonucleoside-RNA + GTP = a ribonucleotidyl-ribonucleotide-RNA + GMP + diphosphate. It catalyses the reaction a 3'-end 2',3'-cyclophospho-ribonucleotide-RNA + a 5'-end dephospho-ribonucleoside-RNA + GTP + H2O = a ribonucleotidyl-ribonucleotide-RNA + GMP + diphosphate + H(+). Its function is as follows. Catalytic subunit of the tRNA-splicing ligase complex that acts by directly joining spliced tRNA halves to mature-sized tRNAs by incorporating the precursor-derived splice junction phosphate into the mature tRNA as a canonical 3',5'-phosphodiester. May act as an RNA ligase with broad substrate specificity, and may function toward other RNAs. The chain is RNA-splicing ligase RtcB homolog from Drosophila melanogaster (Fruit fly).